The primary structure comprises 376 residues: UDP-N-acetylglucosamine 2-epimerase (376 aa).

Substrate contacts are provided by residues R10, K15, D95, E117, H213, Q271, F276, 290–292, E296, and R313; that span reads SGG.

This sequence belongs to the UDP-N-acetylglucosamine 2-epimerase family. As to quaternary structure, homodimer.

The protein localises to the cytoplasm. It carries out the reaction UDP-N-acetyl-alpha-D-glucosamine = UDP-N-acetyl-alpha-D-mannosamine. The protein operates within bacterial outer membrane biogenesis; enterobacterial common antigen biosynthesis. Functionally, catalyzes the reversible epimerization at C-2 of UDP-N-acetylglucosamine (UDP-GlcNAc) and thereby provides bacteria with UDP-N-acetylmannosamine (UDP-ManNAc), the activated donor of ManNAc residues. The protein is UDP-N-acetylglucosamine 2-epimerase of Yersinia pestis.